We begin with the raw amino-acid sequence, 176 residues long: Ribosome maturation factor RimP (176 aa).

The segment at 143-176 (LKPQTAKKKGRQEETEDMTLELDAVSRAVPEAEI) is disordered.

It belongs to the RimP family.

The protein localises to the cytoplasm. Functionally, required for maturation of 30S ribosomal subunits. This is Ribosome maturation factor RimP from Chlorobium luteolum (strain DSM 273 / BCRC 81028 / 2530) (Pelodictyon luteolum).